The following is a 228-amino-acid chain: UPF0758 protein CLI_3057 (228 aa).

One can recognise an MPN domain in the interval 106–228 (KINTPLDVSN…YVSMKEKGTI (123 aa)). Zn(2+) is bound by residues His177, His179, and Asp190. The JAMM motif signature appears at 177-190 (HNHPSGDPTPSKED).

It belongs to the UPF0758 family.

The protein is UPF0758 protein CLI_3057 of Clostridium botulinum (strain Langeland / NCTC 10281 / Type F).